Reading from the N-terminus, the 446-residue chain is Probable cytosolic iron-sulfur protein assembly protein 1 (446 aa).

WD repeat units follow at residues 17 to 59 (AFKP…AHSN), 63 to 106 (GHTR…PLEE), 143 to 182 (GHEN…EGDD), 192 to 241 (EHDG…EWAC), 247 to 291 (GHSS…PEAS), 330 to 368 (VHTR…NPST), and 398 to 446 (GHGP…SIEL). The span at 106 to 128 (EGTKKGESTEIDVTRRRNNNDSD) shows a compositional bias: basic and acidic residues. Positions 106–133 (EGTKKGESTEIDVTRRRNNNDSDKDNDD) are disordered.

This sequence belongs to the WD repeat CIA1 family.

Essential component of the cytosolic iron-sulfur (Fe/S) protein assembly machinery. Required for the maturation of extramitochondrial Fe/S proteins. The protein is Probable cytosolic iron-sulfur protein assembly protein 1 of Pyricularia oryzae (strain 70-15 / ATCC MYA-4617 / FGSC 8958) (Rice blast fungus).